A 296-amino-acid polypeptide reads, in one-letter code: Acetylglutamate kinase (296 aa).

Substrate-binding positions include 71-72, Arg93, and Asn186; that span reads GG.

The protein belongs to the acetylglutamate kinase family. ArgB subfamily.

The protein resides in the cytoplasm. It carries out the reaction N-acetyl-L-glutamate + ATP = N-acetyl-L-glutamyl 5-phosphate + ADP. Its pathway is amino-acid biosynthesis; L-arginine biosynthesis; N(2)-acetyl-L-ornithine from L-glutamate: step 2/4. In terms of biological role, catalyzes the ATP-dependent phosphorylation of N-acetyl-L-glutamate. This Synechococcus sp. (strain RCC307) protein is Acetylglutamate kinase.